A 359-amino-acid polypeptide reads, in one-letter code: Alanine racemase, biosynthetic (359 aa).

The Proton acceptor; specific for D-alanine role is filled by K34. Residue K34 is modified to N6-(pyridoxal phosphate)lysine. An N6-carboxylysine modification is found at K122. Substrate is bound at residue R129. Catalysis depends on Y255, which acts as the Proton acceptor; specific for L-alanine. Substrate is bound at residue M303.

Belongs to the alanine racemase family. As to quaternary structure, homodimer. Pyridoxal 5'-phosphate serves as cofactor.

The enzyme catalyses L-alanine = D-alanine. Its pathway is amino-acid biosynthesis; D-alanine biosynthesis; D-alanine from L-alanine: step 1/1. It functions in the pathway cell wall biogenesis; peptidoglycan biosynthesis. Its function is as follows. Catalyzes the interconversion of L-alanine and D-alanine. Provides the D-alanine required for cell wall biosynthesis. The polypeptide is Alanine racemase, biosynthetic (Escherichia coli (strain K12)).